The sequence spans 472 residues: Proline--tRNA ligase (472 aa).

It belongs to the class-II aminoacyl-tRNA synthetase family. ProS type 3 subfamily. As to quaternary structure, homodimer.

It localises to the cytoplasm. It carries out the reaction tRNA(Pro) + L-proline + ATP = L-prolyl-tRNA(Pro) + AMP + diphosphate. In terms of biological role, catalyzes the attachment of proline to tRNA(Pro) in a two-step reaction: proline is first activated by ATP to form Pro-AMP and then transferred to the acceptor end of tRNA(Pro). The polypeptide is Proline--tRNA ligase (Ureaplasma urealyticum serovar 10 (strain ATCC 33699 / Western)).